The primary structure comprises 275 residues: Putative carbamate hydrolase RutD (275 aa).

Residues 15-116 (TVVLSSGLGG…SLVVINGWTV (102 aa)) form the AB hydrolase-1 domain.

Belongs to the AB hydrolase superfamily. Hydrolase RutD family.

It carries out the reaction carbamate + 2 H(+) = NH4(+) + CO2. In terms of biological role, involved in pyrimidine catabolism. May facilitate the hydrolysis of carbamate, a reaction that can also occur spontaneously. The polypeptide is Putative carbamate hydrolase RutD (Pantoea ananatis (strain LMG 20103)).